The chain runs to 476 residues: Doublecortin domain-containing protein 2 (476 aa).

2 Doublecortin domains span residues 17–100 (KSVL…LNYL) and 139–221 (CTIF…LPYS). The tract at residues 234 to 476 (FGQKASSLPP…QQNKDYAAVA (243 aa)) is disordered. Polar residues predominate over residues 261–272 (STVGSSDNSSPQ). Serine 270 carries the phosphoserine modification. Residues 279-289 (KKEDVNSEKLT) are compositionally biased toward basic and acidic residues. The segment covering 296–306 (KLKNSQETIPN) has biased composition (polar residues). Positions 354–366 (EKANKDAEQKEDF) are enriched in basic and acidic residues. Positions 415 to 426 (ELQQVNNELQLV) are enriched in low complexity. Positions 446-455 (DPQRPPRPEV) are enriched in basic and acidic residues.

Interacts with DVL1, DVL2 and DVL3. In terms of tissue distribution, ubiquitously expressed. In brain, highly expressed in the entorhinal cortex, inferior temporal cortex, medial temporal cortex, hypothalamus, amygdala and hippocampus. Expressed in liver by cholangiocytes, the epithelial cells of the bile ducts (at protein level).

Its subcellular location is the cell projection. The protein localises to the cilium. It localises to the cytoplasm. It is found in the cytoskeleton. The protein resides in the cilium axoneme. Its subcellular location is the kinocilium. In terms of biological role, protein that plays a role in the inhibition of canonical Wnt signaling pathway. May be involved in neuronal migration during development of the cerebral neocortex. Involved in the control of ciliogenesis and ciliary length. This Homo sapiens (Human) protein is Doublecortin domain-containing protein 2 (DCDC2).